Reading from the N-terminus, the 72-residue chain is Alpha-elapitoxin-Dv2b (72 aa).

Cystine bridges form between Cys-3–Cys-21, Cys-14–Cys-42, Cys-27–Cys-31, Cys-46–Cys-57, and Cys-58–Cys-63.

This sequence belongs to the three-finger toxin family. Long-chain subfamily. Type II alpha-neurotoxin sub-subfamily. Neurotoxin 4.7.3 differs from 4.9.3 only in that Trp-26 has undergone partial photooxidation. As to expression, expressed by the venom gland.

The protein localises to the secreted. Binds with high affinity to muscular (alpha-1/CHRNA1) and neuronal (alpha-7/CHRNA7) nicotinic acetylcholine receptor (nAChR) and inhibits acetylcholine from binding to the receptor, thereby impairing neuromuscular and neuronal transmission. In Dendroaspis viridis (Western green mamba), this protein is Alpha-elapitoxin-Dv2b.